The chain runs to 203 residues: UPF0637 protein MCCL_0722 (203 aa).

This sequence belongs to the UPF0637 family.

This is UPF0637 protein MCCL_0722 from Macrococcus caseolyticus (strain JCSC5402) (Macrococcoides caseolyticum).